We begin with the raw amino-acid sequence, 474 residues long: mRNA cap guanine-N(7) methyltransferase (474 aa).

Polar residues predominate over residues 1 to 12 (MSTDSYTPSQEP). Positions 1–106 (MSTDSYTPSQ…GHEGDEGDED (106 aa)) are disordered. Residues 56–100 (SDIDGKYDKYGERRNAHTTTRDSRLDRLKRVRQKSAEREDVGHEG) are compositionally biased toward basic and acidic residues. In terms of domain architecture, mRNA cap 0 methyltransferase spans 170–474 (SPIYKMRNFN…FYIGFVFEKV (305 aa)). An mRNA-binding site is contributed by 179 to 180 (NN). S-adenosyl-L-methionine is bound by residues Lys-183, Cys-207, Asp-229, Asp-269, Gln-299, and Tyr-304.

It belongs to the class I-like SAM-binding methyltransferase superfamily. mRNA cap 0 methyltransferase family.

It localises to the nucleus. The catalysed reaction is a 5'-end (5'-triphosphoguanosine)-ribonucleoside in mRNA + S-adenosyl-L-methionine = a 5'-end (N(7)-methyl 5'-triphosphoguanosine)-ribonucleoside in mRNA + S-adenosyl-L-homocysteine. In terms of biological role, responsible for methylating the 5'-cap structure of mRNAs. This Candida albicans (strain SC5314 / ATCC MYA-2876) (Yeast) protein is mRNA cap guanine-N(7) methyltransferase (ABD1).